The sequence spans 2359 residues: MDNTPDTLSISEEAAGLPPIAVVSFACRLPGQNSDPEALWRFLERGQTASNEVPESRFSAQAHYDGTRRPRTMKGRGGMFLHDVDPARFDAPFFNISAVEARSMDPQQRQLLEVVYEALENGGLTLDGISGEQIGCFVSSFTTDFLALQNRDPDDRPINLTTGTKRSIMSNRISHYFNIKGPSMTVDTACSGGLTSVDLACRYLAANDISAAVVAASHLFLNPDELLEEGQVGSVYSRTGLCQVFDAKADGYVKAEAVNAVILKRLDQAVADGDPIRAVIRASASNSNGATVGISTPSAEQQAACIRAAYKRAGISDFNATAYVECHGTGTQAGDPIEVNGLSAVFGGTRDPQAPLILGSVKGNLGHSEPAAGISGLIKAVLSIEKGKIPGQSTLKELNPKIDLLGGALQIPTKTISWPAVPLRRVSVNSFGFGGANAHVIVEEPKGSLGEEWSKPHASSRSSQALASRQSTSKKLYTMVFSAASEESLKRYYTDIKRHLADLNVKVKPSDLAYTLGQRRTHHAYRGYVVTSAANLNRAKVEFGEKGMEPPKVAFVFTGQGSQWPQMGAGLIKNFPCAAKRLRYLDTVLQSTSTPPSWSLVDELSEPRQADYYQKPELSQPLITALQLAILSILEEWGVLPRAVVGHSSGEIAAAYAAGYLSQEQAILAAFYRGQAAAVLGPTIVEPLGMCAVGAGTEQLKQLLPDMPREVQVACVNSPNSVTLSGPKSHLVGVQAQLEAQGTFARLLRVDLAYHSSYVADIAALYKKQLEAEWAKYPAPARASDAAQMFSSVTGHLLDQPCDSEYWRVNMASPVLFSDAAAELVKDSSATLLLEIGPSGALAGPVRQILEGISVKGVQYLAALDRGKDGGEAMHELAGKLYVADYPLSLGAVNFPSADEPTSRPSVLVDLPNYSWDHSAVYWHESDASKDWRFGQFPYHELLGRKILGTPWSAPSWKSIIRLDDMPWLKDHRMAGDPVFPAAGYLAMAIEAVYQARQSVNPIPDVAGVTDLQFVLRDVNFRRALALDSGKDTTVVLAFTEVSDDYTSWTGFRVLSIQEGTSVTHCDGRISVRQVAARAADKETLAPLAYSESAEHWYRALDHRGCTYGPDFQRLLEIECRAGQQETRSTLSRNPPSTGFPQHPYAMHPSTLDICFQSVFPALYSGLRSEIKSLLLPSHLEELTVGPSGGLPAEGETAVSVARAGHSGAGAKEKRRNHYTDASVWSTSTGQLLLEFKGLRFSELNMGDGVDADPALLVPAWLPDFEFLSQDQILTVLRPESAVADVINLVASKKPTLRVGEINLTSDSVSTAWFEGASEGLRGASEHYTYADPDSARLSTVRSSVGDRPNAEFKLLGKDANAIFADPGVDLVIVQYQDLVATAQTSVLERIKPSEAKGDVVYLFVQRSATTPSGEDADEALLQDAGFNTLFKIPIDGSSFAYLSRSIELATPPSEQEEPQVISIISADPQSGLLNTFTESLTEAGYAVQLQTTFGAPTNDVKAVVVLDDFSSPVLGDVTDEQWTSIRDLVLKAPSTIWVTQGAQHKVTNPNNALIHGLSRSIRSENPAVRLVTLDVESKSPRDNSVTILKLLDSIASREGGSGEDSEFVERDGILHVSRTLRKADAEELNVNDAPATAPNAQSLLDNAKHVKLGITNLGSFDSLELYEATGEEPPLAADQVEIEVYATGLNYKDVQISTGAIPGDDQALGFDGAGSVTKVGQNVHTFRVGDKVAFTDSGAFANRVRTTYKRVHHVPDGMALEVAAALPLSFMTAIYALVNIAGLRKGQSVLIHSGAGGVGIAAIQLAQYLQAEIYVTVGSDEKRSFLQEHLNIPASRIFSSRTTEFADAIIASTKGRGVDVILNSLTGELLDETWRICADGGILVDIGRGLRGRRLAPGPFERNCLVKAFDLTSKQVSDDIVRSLLTQAFGLFEKQHLQLIHPVRAFSYAEIRQAFEHLSTGRHVGKVVVSHGSDNGAVPIRPAPSLSVIRKDRSYLITGGLHGIGGTLAEYLALRGAKCIVVLSRSGSSTPRAAWIVETCRRLGCEIQVVKGDVTSYESIKGALQQAKLPVCGIVHGAMVLLDKPYELMDADSYRRCIAPKVRGAWNLHQAAEELGLELDFFTLLSSISGVIGQSGQANYAAANSFLDSFAAYRRGLGLPALSLDIGAVQDTGVAMENPGLLHYFTDPQWLNIEQGELFYLMDASIKEQQNARNAPSSQLIMALSFPLPATSDLLNDIRFRTLSRAGTSNQPAQNSANQESQAVTDFLCMQSSGADSTALTEAAIELFQSQLLRMLRLDEPIKANKPLSAYGMDSLSAVKLRNWVEKSFSVTFAVFEILGANGLQALCSKLITRLQTV.

The region spanning 17–444 (LPPIAVVSFA…GANAHVIVEE (428 aa)) is the Ketosynthase family 3 (KS3) domain. Catalysis depends on for beta-ketoacyl synthase activity residues C190, H327, and H367. Residues 556 to 868 (VFTGQGSQWP…QYLAALDRGK (313 aa)) are malonyl-CoA:ACP transacylase (MAT) domain. Catalysis depends on S648, which acts as the For malonyltransferase activity. Positions 940-1077 (HELLGRKILG…GRISVRQVAA (138 aa)) are N-terminal hotdog fold. The segment at 940 to 1245 (HELLGRKILG…FKGLRFSELN (306 aa)) is dehydratase (DH) domain. The PKS/mFAS DH domain maps to 940 to 1250 (HELLGRKILG…FSELNMGDGV (311 aa)). H972 functions as the Proton acceptor; for dehydratase activity in the catalytic mechanism. The C-terminal hotdog fold stretch occupies residues 1089 to 1250 (AYSESAEHWY…FSELNMGDGV (162 aa)). D1153 acts as the Proton donor; for dehydratase activity in catalysis. Positions 1659-1970 (GSFDSLELYE…TGRHVGKVVV (312 aa)) are enoyl reductase (ER) domain. The tract at residues 1995–2172 (SYLITGGLHG…LSLDIGAVQD (178 aa)) is ketoreductase (KR) domain. One can recognise a Carrier domain in the interval 2280 to 2356 (ALTEAAIELF…ALCSKLITRL (77 aa)). S2316 is modified (O-(pantetheine 4'-phosphoryl)serine).

It participates in secondary metabolite biosynthesis; terpenoid biosynthesis. In terms of biological role, low-reducing polyketide synthase; part of the gene cluster that mediates the biosynthesis of various drimane-type sesquiterpene esters, compounds that exhibit diverse biological activities and are widely present in eukaryotes. The pathway begins with the synthesis of the backbone drimenol by the terpene cyclase drtB using farnesyl pyrophosphate (FPP) as substrate. The cytochrome P450 monooxygenase drtD is then responsible for the hydroxylations at C-6, C-9 and C-12, as well as the oxidation of hydroxyl groups at C-6 and C-11 to a ketone and an aldehyde, respectively. Then, the biosynthesis can go in two directions, either the hydroxylated drimenol is further hydroxylated at C-2 and C-3 by an enzyme(s) not associated with the drt cluster, or the FAD-binding oxidoreductase drtC further oxidizes C-11 or C-12 to form the butyrolactone ring. DrtB, drtD and drtC are solely responsible for the formation of the different drimane structures observed during drimane sesquiterpenes biosynthesis. The polyketide synthase drtA synthesizes different lengths (C6 and C8) of PKS chains, which are then oxidized to varying degrees by the short-chain dehydrogenase drtF. Finally, these PKS chains are transferred onto drimane sesquiterpenes by the acyltransferase drtE, forming the sesquiterpene esters. In addition to the different fatty acyl-CoA chains produced by drtA, drtE is also able to use cinnamoyl-CoA as a substrate. This Aspergillus calidoustus protein is Low-reducing polyketide synthase drtA.